The chain runs to 277 residues: Bis(5'-nucleosyl)-tetraphosphatase, symmetrical (277 aa).

The protein belongs to the Ap4A hydrolase family.

The catalysed reaction is P(1),P(4)-bis(5'-adenosyl) tetraphosphate + H2O = 2 ADP + 2 H(+). In terms of biological role, hydrolyzes diadenosine 5',5'''-P1,P4-tetraphosphate to yield ADP. This chain is Bis(5'-nucleosyl)-tetraphosphatase, symmetrical, found in Chromobacterium violaceum (strain ATCC 12472 / DSM 30191 / JCM 1249 / CCUG 213 / NBRC 12614 / NCIMB 9131 / NCTC 9757 / MK).